The sequence spans 227 residues: ATP synthase subunit a (227 aa).

6 consecutive transmembrane segments (helical) span residues 14–34 (LLNIPLVLLALIMPWKLFVSF), 69–89 (WVVLFSSLMLMLMTLNVIGLF), 98–118 (QLSMNLGLAVPLWLGTVVYGF), 137–157 (LLVPVLVVVETLSILMRPLAL), 169–189 (HLLMHLISSAVLGLMELSVML), and 205–223 (IAVALIQGYVFAILVTLYL).

The protein belongs to the ATPase A chain family. As to quaternary structure, F-type ATPases have 2 components, CF(1) - the catalytic core - and CF(0) - the membrane proton channel. CF(1) has five subunits: alpha(3), beta(3), gamma(1), delta(1), epsilon(1). CF(0) has three main subunits: a, b and c.

It localises to the mitochondrion inner membrane. Functionally, mitochondrial membrane ATP synthase (F(1)F(0) ATP synthase or Complex V) produces ATP from ADP in the presence of a proton gradient across the membrane which is generated by electron transport complexes of the respiratory chain. F-type ATPases consist of two structural domains, F(1) - containing the extramembraneous catalytic core and F(0) - containing the membrane proton channel, linked together by a central stalk and a peripheral stalk. During catalysis, ATP synthesis in the catalytic domain of F(1) is coupled via a rotary mechanism of the central stalk subunits to proton translocation. Key component of the proton channel; it may play a direct role in the translocation of protons across the membrane. This Branchiostoma floridae (Florida lancelet) protein is ATP synthase subunit a (ATP6).